Here is a 99-residue protein sequence, read N- to C-terminus: uncharacterized protein (99 aa).

This is an uncharacterized protein from Lepidoptera (butterflies and moths).